Here is a 143-residue protein sequence, read N- to C-terminus: Putative pre-16S rRNA nuclease (143 aa).

It belongs to the YqgF nuclease family.

The protein resides in the cytoplasm. Its function is as follows. Could be a nuclease involved in processing of the 5'-end of pre-16S rRNA. The chain is Putative pre-16S rRNA nuclease from Mycoplasma capricolum subsp. capricolum (strain California kid / ATCC 27343 / NCTC 10154).